Reading from the N-terminus, the 144-residue chain is Testis-specific protein TSX (144 aa).

Disordered stretches follow at residues 1-21 (MSEKQSPKTSEAECSAMDLPE), 69-99 (EDRVSSTDDEDTCQAGCTEDDETSHSDRDID), and 120-144 (FTDQNPQADQDLEETESDGAMNPTD). The segment covering 75-90 (TDDEDTCQAGCTEDDE) has biased composition (acidic residues).

Testis.

Functionally, may have an RNA/DNA binding role. The protein is Testis-specific protein TSX (Tsx) of Mus musculus (Mouse).